The chain runs to 270 residues: Ribosomal RNA-processing protein 7 homolog (270 aa).

Residues T233–K268 are a coiled coil.

Belongs to the RRP7 family.

The sequence is that of Ribosomal RNA-processing protein 7 homolog from Caenorhabditis elegans.